The following is a 59-amino-acid chain: Large ribosomal subunit protein bL25 (59 aa).

The protein belongs to the bacterial ribosomal protein bL25 family.

The protein is Large ribosomal subunit protein bL25 (ctc) of Bacillus caldolyticus.